Consider the following 252-residue polypeptide: Flagellar L-ring protein (252 aa).

Residues 1–25 (MLKLASLNRIVLTGTLLAAAGLASG) form the signal peptide. A lipid anchor (N-palmitoyl cysteine) is attached at C26. C26 is lipidated: S-diacylglycerol cysteine.

This sequence belongs to the FlgH family. The basal body constitutes a major portion of the flagellar organelle and consists of four rings (L,P,S, and M) mounted on a central rod.

It localises to the cell outer membrane. Its subcellular location is the bacterial flagellum basal body. In terms of biological role, assembles around the rod to form the L-ring and probably protects the motor/basal body from shearing forces during rotation. The chain is Flagellar L-ring protein from Nitrobacter winogradskyi (strain ATCC 25391 / DSM 10237 / CIP 104748 / NCIMB 11846 / Nb-255).